The chain runs to 175 residues: Zinc metalloproteinase-disintegrin-like catroriarin (175 aa).

A Disintegrin domain is found at 1–63 (NPCCDAATCK…ECPADVFHKN (63 aa)). 9 disulfides stabilise this stretch: Cys3–Cys26, Cys17–Cys23, Cys22–Cys48, Cys35–Cys55, Cys42–Cys74, Cys67–Cys79, Cys101–Cys147, Cys114–Cys124, and Cys131–Cys171. A D/ECD-tripeptide motif is present at residues 41–43 (ECD). Ca(2+) contacts are provided by Asp43, Pro44, Glu46, Asp58, and Val59.

The protein belongs to the venom metalloproteinase (M12B) family. P-III subfamily. P-IIIa sub-subfamily. Monomer. Zn(2+) is required as a cofactor. Post-translationally, glycosylated. As to expression, expressed by the venom gland.

The protein localises to the secreted. Its function is as follows. Snake venom metalloproteinase that impairs hemostasis in the envenomed animal. This is Zinc metalloproteinase-disintegrin-like catroriarin from Crotalus atrox (Western diamondback rattlesnake).